The sequence spans 206 residues: High frequency lysogenization protein HflD homolog (206 aa).

The protein belongs to the HflD family.

It localises to the cytoplasm. Its subcellular location is the cell inner membrane. This Idiomarina loihiensis (strain ATCC BAA-735 / DSM 15497 / L2-TR) protein is High frequency lysogenization protein HflD homolog.